Reading from the N-terminus, the 555-residue chain is Hydroxylamine reductase (555 aa).

[4Fe-4S] cluster contacts are provided by Cys5, Cys8, Cys17, and Cys23. Hybrid [4Fe-2O-2S] cluster contacts are provided by His248, Glu272, Cys316, Cys408, Cys436, Cys461, Glu496, and Lys498. Position 408 is a cysteine persulfide (Cys408).

Belongs to the HCP family. It depends on [4Fe-4S] cluster as a cofactor. The cofactor is hybrid [4Fe-2O-2S] cluster.

The protein localises to the cytoplasm. It carries out the reaction A + NH4(+) + H2O = hydroxylamine + AH2 + H(+). Functionally, catalyzes the reduction of hydroxylamine to form NH(3) and H(2)O. The sequence is that of Hydroxylamine reductase from Halothermothrix orenii (strain H 168 / OCM 544 / DSM 9562).